The following is a 163-amino-acid chain: MSLLLLVVSALHILILVLLFVATLDKSWWTLPDKESLNLWYDCTWNTTTQTWACSNVSENGWLKAVQALMVLSLILCCLSFILFMFQLYTMRRGGLFYATGLCQLCTSAAVFSGALIYAIHTEEILAKHPSGGSFGYCFALAWVAFPLALVSGTVYIHLRKRE.

The helical transmembrane segment at 4 to 24 (LLLVVSALHILILVLLFVATL) threads the bilayer. 2 N-linked (GlcNAc...) asparagine glycosylation sites follow: N46 and N56. The next 3 helical transmembrane spans lie at 66–86 (VQAL…LFMF), 100–120 (TGLC…IYAI), and 139–159 (FALA…YIHL).

Belongs to the PMP-22/EMP/MP20 family.

The protein resides in the membrane. Functionally, probably involved in cell proliferation and cell-cell interactions. This chain is Epithelial membrane protein 3 (Emp3), found in Mus musculus (Mouse).